A 29-amino-acid polypeptide reads, in one-letter code: Serum amyloid P-component (29 aa).

The Pentraxin (PTX) domain occupies 6–29 (LGKVFVFSKESNVDDVKLLTPQTE).

This sequence belongs to the pentraxin family. As to quaternary structure, homopentamer. Pentraxin (or pentaxin) have a discoid arrangement of 5 non-covalently bound subunits. Ca(2+) serves as cofactor.

Its subcellular location is the secreted. The chain is Serum amyloid P-component from Hippoglossus hippoglossus (Atlantic halibut).